A 303-amino-acid chain; its full sequence is UDP-3-O-acyl-N-acetylglucosamine deacetylase (303 aa).

Residues His-78, His-237, and Asp-241 each coordinate Zn(2+). The active-site Proton donor is the His-264.

This sequence belongs to the LpxC family. Zn(2+) is required as a cofactor.

It catalyses the reaction a UDP-3-O-[(3R)-3-hydroxyacyl]-N-acetyl-alpha-D-glucosamine + H2O = a UDP-3-O-[(3R)-3-hydroxyacyl]-alpha-D-glucosamine + acetate. It functions in the pathway glycolipid biosynthesis; lipid IV(A) biosynthesis; lipid IV(A) from (3R)-3-hydroxytetradecanoyl-[acyl-carrier-protein] and UDP-N-acetyl-alpha-D-glucosamine: step 2/6. Functionally, catalyzes the hydrolysis of UDP-3-O-myristoyl-N-acetylglucosamine to form UDP-3-O-myristoylglucosamine and acetate, the committed step in lipid A biosynthesis. The chain is UDP-3-O-acyl-N-acetylglucosamine deacetylase from Pseudomonas paraeruginosa (strain DSM 24068 / PA7) (Pseudomonas aeruginosa (strain PA7)).